We begin with the raw amino-acid sequence, 189 residues long: 3-hydroxyanthranilate 3,4-dioxygenase (189 aa).

Arg46 serves as a coordination point for O2. Fe cation is bound by residues His50, Glu56, and His94. Glu56 is a substrate binding site. Arg98 and Glu109 together coordinate substrate. Cys124, Cys127, Cys161, and Cys164 together coordinate Fe cation.

Belongs to the 3-HAO family. In terms of assembly, homodimer. Requires Fe(2+) as cofactor.

It catalyses the reaction 3-hydroxyanthranilate + O2 = (2Z,4Z)-2-amino-3-carboxymuconate 6-semialdehyde. It functions in the pathway cofactor biosynthesis; NAD(+) biosynthesis; quinolinate from L-kynurenine: step 3/3. In terms of biological role, catalyzes the oxidative ring opening of 3-hydroxyanthranilate to 2-amino-3-carboxymuconate semialdehyde, which spontaneously cyclizes to quinolinate. This is 3-hydroxyanthranilate 3,4-dioxygenase from Shewanella woodyi (strain ATCC 51908 / MS32).